Consider the following 179-residue polypeptide: Peptidyl-tRNA hydrolase 2, mitochondrial (179 aa).

The helical transmembrane segment at 10–32 threads the bilayer; the sequence is YLTNPGALSLAAGVACGVCLGWG. Residues Lys76, Lys81, Lys95, Lys106, Lys115, Lys171, and Lys177 each participate in a glycyl lysine isopeptide (Lys-Gly) (interchain with G-Cter in ubiquitin) cross-link.

It belongs to the PTH2 family. Monomer. In terms of processing, ubiquitinated by PRKN during mitophagy, leading to its degradation and enhancement of mitophagy. Deubiquitinated by USP30.

The protein resides in the mitochondrion outer membrane. The enzyme catalyses an N-acyl-L-alpha-aminoacyl-tRNA + H2O = an N-acyl-L-amino acid + a tRNA + H(+). In terms of biological role, peptidyl-tRNA hydrolase which releases tRNAs from the ribosome during protein synthesis. Promotes caspase-independent apoptosis by regulating the function of two transcriptional regulators, AES and TLE1. The sequence is that of Peptidyl-tRNA hydrolase 2, mitochondrial (PTRH2) from Bos taurus (Bovine).